A 248-amino-acid chain; its full sequence is Probable pyridoxal 5'-phosphate synthase subunit pdx2 (248 aa).

Residue 70 to 72 (GES) coordinates L-glutamine. Cys-106 (nucleophile) is an active-site residue. Residues Arg-136 and 174–175 (IR) each bind L-glutamine. Catalysis depends on charge relay system residues His-221 and Glu-223.

Belongs to the glutaminase PdxT/SNO family.

The catalysed reaction is aldehydo-D-ribose 5-phosphate + D-glyceraldehyde 3-phosphate + L-glutamine = pyridoxal 5'-phosphate + L-glutamate + phosphate + 3 H2O + H(+). It carries out the reaction L-glutamine + H2O = L-glutamate + NH4(+). The protein operates within cofactor biosynthesis; pyridoxal 5'-phosphate biosynthesis. Functionally, catalyzes the hydrolysis of glutamine to glutamate and ammonia as part of the biosynthesis of pyridoxal 5'-phosphate. The resulting ammonia molecule is channeled to the active site of pdx1. This is Probable pyridoxal 5'-phosphate synthase subunit pdx2 from Dictyostelium discoideum (Social amoeba).